Here is a 679-residue protein sequence, read N- to C-terminus: UvrABC system protein B (679 aa).

The Helicase ATP-binding domain occupies 25–176 (KGVNTGKEFQ…NLRSYLRSLV (152 aa)). 38–45 (GATGTGKT) contacts ATP. The Beta-hairpin motif lies at 91-114 (YYDYYQPEAYVPVSDTYIAKTASI). The region spanning 429–583 (QIEDLLSEIR…KKYNQVNGIT (155 aa)) is the Helicase C-terminal domain. The region spanning 639–674 (PDLIEKLEIKMKDAAKELNFEEAANLRDRIKKLRQK) is the UVR domain.

This sequence belongs to the UvrB family. As to quaternary structure, forms a heterotetramer with UvrA during the search for lesions. Interacts with UvrC in an incision complex.

Its subcellular location is the cytoplasm. Its function is as follows. The UvrABC repair system catalyzes the recognition and processing of DNA lesions. A damage recognition complex composed of 2 UvrA and 2 UvrB subunits scans DNA for abnormalities. Upon binding of the UvrA(2)B(2) complex to a putative damaged site, the DNA wraps around one UvrB monomer. DNA wrap is dependent on ATP binding by UvrB and probably causes local melting of the DNA helix, facilitating insertion of UvrB beta-hairpin between the DNA strands. Then UvrB probes one DNA strand for the presence of a lesion. If a lesion is found the UvrA subunits dissociate and the UvrB-DNA preincision complex is formed. This complex is subsequently bound by UvrC and the second UvrB is released. If no lesion is found, the DNA wraps around the other UvrB subunit that will check the other stand for damage. This Prochlorococcus marinus (strain MIT 9301) protein is UvrABC system protein B.